Reading from the N-terminus, the 159-residue chain is Large ribosomal subunit protein uL30 (159 aa).

It belongs to the universal ribosomal protein uL30 family. As to quaternary structure, part of the 50S ribosomal subunit.

The polypeptide is Large ribosomal subunit protein uL30 (Aeropyrum pernix (strain ATCC 700893 / DSM 11879 / JCM 9820 / NBRC 100138 / K1)).